We begin with the raw amino-acid sequence, 127 residues long: Longitudinals lacking protein-like (127 aa).

The BTB domain maps to 33 to 98; it reads TDVTLACEGQ…MYAGEVNVSQ (66 aa).

In terms of assembly, the BTB domain interacts with the BTB domain of Trl in vitro. Found in a Pc-containing complex.

The protein resides in the nucleus. Functionally, required, together with Trl, for maintaining the repressed state of target genes including homeotic genes Scr and Ubx. May also be involved in the activation of homeotic genes. Binds to a DNA Polycomb response element (PRE) at the bithorax complex. Also binds to polytene chromosomes at several hundred sites, many of which are shared with Trl and ph-p. Required during embryonic development. This is Longitudinals lacking protein-like from Drosophila melanogaster (Fruit fly).